Consider the following 190-residue polypeptide: NADH-ubiquinone oxidoreductase chain 5 (190 aa).

A run of 6 helical transmembrane segments spans residues 1–21, 68–88, 94–114, 118–138, 146–166, and 167–187; these read MVISPSTLLVSITLSIICLIV, INILKFLAFLSLINLFLFVGL, NVTFSIWLSNTAANVSLSILF, FIVFLTVALVVTWSIMNFSLL, NVFLLLTIFLLNMLILTCSNS, and LFLLFLGWEGVGFLSFLLIKM.

This sequence belongs to the complex I subunit 5 family.

The protein resides in the mitochondrion inner membrane. It catalyses the reaction a ubiquinone + NADH + 5 H(+)(in) = a ubiquinol + NAD(+) + 4 H(+)(out). Functionally, core subunit of the mitochondrial membrane respiratory chain NADH dehydrogenase (Complex I) that is believed to belong to the minimal assembly required for catalysis. Complex I functions in the transfer of electrons from NADH to the respiratory chain. The immediate electron acceptor for the enzyme is believed to be ubiquinone. The sequence is that of NADH-ubiquinone oxidoreductase chain 5 (ND5) from Arbacia lixula (Black urchin).